A 156-amino-acid polypeptide reads, in one-letter code: Histidine-containing phosphotransfer protein 2 (156 aa).

At methionine 1 the chain carries N-acetylmethionine. Residues 40–147 (SPDFVSEVLS…NLEKQIIQAG (108 aa)) enclose the HPt domain. Histidine 82 is subject to Phosphohistidine.

As to quaternary structure, interacts with the B-type response regulators ARR1, ARR2 and ARR10. Binds to AHK1, AHK2, AHK3, AHK4, AHK5, ETR1 and CKI1. Post-translationally, two-component system major event consists of a His-to-Asp phosphorelay between a sensor histidine kinase (HK) and a response regulator (RR). In plants, the His-to-Asp phosphorelay involves an additional intermediate named Histidine-containing phosphotransfer protein (HPt). This multistep phosphorelay consists of a His-Asp-His-Asp sequential transfer of a phosphate group between first a His and an Asp of the HK protein, followed by the transfer to a conserved His of the HPt protein and finally the transfer to an Asp in the receiver domain of the RR protein. In terms of tissue distribution, strongly expressed in flowers and roots. Detected also in leaves, siliques and stems.

Its subcellular location is the cytoplasm. It localises to the cytosol. The protein resides in the nucleus. Its function is as follows. Functions as a two-component phosphorelay mediators between cytokinin sensor histidine kinases and response regulator (B-type ARRs). Plays an important role in propagating cytokinin signal transduction through the multistep His-to-Asp phosphorelay. The protein is Histidine-containing phosphotransfer protein 2 (AHP2) of Arabidopsis thaliana (Mouse-ear cress).